The sequence spans 632 residues: Galactan 5-O-arabinofuranosyltransferase (632 aa).

The next 13 helical transmembrane spans lie at 10–30, 45–65, 76–96, 162–182, 184–204, 206–226, 242–259, 263–282, 298–318, 344–364, 375–395, 409–429, and 434–454; these read QIVLAAVVASGVAAVSLIAIA, ALTTVGQVGCLTGLLAVGGVW, LGGLVFVSAFTVVTLGMPLGA, WAITSITIAVAITLVLWWQMI, FEYALLVTIATAAVTLVYSSP, PYAAMITVLLPPALVLTWSGL, GWATVVGAGIFLGFAATW, LLAYTAFTVVLMTLLLATAL, LAGIVVIAAAIGAITWLPFLA, FPMLQFSLLGMICMLGTLWLI, ALMISVLAVYLWSLLSILTTL, LTVLLVTAGVFGFIETAQSLA, and AVLSVASAIGLAGAIAFSQDI. Topologically, residues 455–632 are extracellular; it reads PNVLRPDLTI…LAIRKPMGNA (178 aa).

The protein belongs to the glycosyltransferase 85 family.

Its subcellular location is the cell membrane. It carries out the reaction Adds an alpha-D-arabinofuranosyl group from trans,octacis-decaprenylphospho-beta-D-arabinofuranose at the 5-O-position of the eighth, tenth and twelfth galactofuranose unit of the galactofuranan chain of [beta-D-galactofuranosyl-(1-&gt;5)-beta-D-galactofuranosyl-(1-&gt;6)]14-beta-D-galactofuranosyl-(1-&gt;5)-beta-D-galactofuranosyl-(1-&gt;4)-alpha-L-rhamnopyranosyl-(1-&gt;3)-N-acetyl-alpha-D-glucosaminyl-diphospho-trans,octacis-decaprenol.. The protein operates within cell wall biogenesis; cell wall polysaccharide biosynthesis. Functionally, involved in the biosynthesis of the arabinogalactan (AG) region of the mycolylarabinogalactan-peptidoglycan (mAGP) complex, an essential component of the mycobacterial cell wall. Catalyzes the addition of the first key arabinofuranosyl (Araf) residue from the sugar donor decaprenyl-phospho-arabinose (DPA) on the C-5 of a 6-linked galactofuranosyl (Galf) of the galactan domain, thus 'priming' the galactan for further elaboration by other arabinofuranosyltransferases. The chain is Galactan 5-O-arabinofuranosyltransferase from Mycobacterium leprae (strain TN).